Here is a 90-residue protein sequence, read N- to C-terminus: Large ribosomal subunit protein bL27 (90 aa).

Positions 1–21 (MAHKKAGGSSRNGRDSQAKRL) are disordered.

Belongs to the bacterial ribosomal protein bL27 family.

In Laribacter hongkongensis (strain HLHK9), this protein is Large ribosomal subunit protein bL27.